The chain runs to 309 residues: MTKTFIFGHKNPDTDAISSALIMADFEQQTGNTEAKAYRLGEISAETQFALDHFNVEAPELLNEDLKGQDVILVDHNEFQQSADTISNATIKHVIDHHRISNFETAGPLYYRAEPVGCSATILYKMYKERGFEIKPEIAGLMISAIISDSLLFKSPTCTKEDVDAAQALKDIANVDLEAYGLEMLKAGASTTDKSAETLVNMDAKSFNMGDYVTRIAQVNTVDIDEVLDRKEEFEKVMLEMSANEKYDLFVLVVTDIINSDSKILVVGAEKDKVGEAFKVQLDDGMAFLSGVVSRKKQVVPQITEVLTQ.

Mn(2+)-binding residues include His-9, Asp-13, Asp-15, Asp-75, His-97, and Asp-149.

It belongs to the PPase class C family. Requires Mn(2+) as cofactor.

The protein localises to the cytoplasm. The enzyme catalyses diphosphate + H2O = 2 phosphate + H(+). The polypeptide is Probable manganese-dependent inorganic pyrophosphatase (Staphylococcus epidermidis (strain ATCC 35984 / DSM 28319 / BCRC 17069 / CCUG 31568 / BM 3577 / RP62A)).